The primary structure comprises 233 residues: Lipoprotein-releasing system ATP-binding protein LolD (233 aa).

The ABC transporter domain maps to 6–233 (LQCDNLCKRY…TAELSLMGAE (228 aa)). An ATP-binding site is contributed by 42–49 (GSSGSGKS).

The protein belongs to the ABC transporter superfamily. Lipoprotein translocase (TC 3.A.1.125) family. The complex is composed of two ATP-binding proteins (LolD) and two transmembrane proteins (LolC and LolE).

It is found in the cell inner membrane. Its function is as follows. Part of the ABC transporter complex LolCDE involved in the translocation of mature outer membrane-directed lipoproteins, from the inner membrane to the periplasmic chaperone, LolA. Responsible for the formation of the LolA-lipoprotein complex in an ATP-dependent manner. This chain is Lipoprotein-releasing system ATP-binding protein LolD, found in Shigella boydii serotype 4 (strain Sb227).